Here is a 928-residue protein sequence, read N- to C-terminus: Protein Niban 1 (928 aa).

Gly-2 carries N-myristoyl glycine lipidation. A phosphoserine mark is found at Ser-579, Ser-582, Ser-596, Ser-602, and Ser-646. A compositionally biased stretch (polar residues) spans 580-596 (VSSLTDLKPPTGSNQAS). The tract at residues 580–600 (VSSLTDLKPPTGSNQASPARR) is disordered. Disordered regions lie at residues 618–654 (VFQE…GTEQ) and 669–707 (ATED…TASG). Residues 690–701 (LEDEEPAQEEPE) are compositionally biased toward acidic residues. At Ser-708 the chain carries Phosphoserine. Disordered regions lie at residues 723 to 877 (PVDS…ATAS) and 899 to 928 (PNPD…PSEE). The segment covering 801–818 (GGLTEEPLGPMEGELPGE) has biased composition (low complexity). Residues 825–834 (HEGRGGKCTE) are compositionally biased toward basic and acidic residues. Residues 865–877 (MGGQSSAAQATAS) show a composition bias toward low complexity. A compositionally biased stretch (basic and acidic residues) spans 905-915 (LSHKDDVKEGE). A Phosphoserine modification is found at Ser-926.

It belongs to the Niban family. As to expression, expressed in various types of thyroid tumor such as papillary thyroid carcinomas and oxyphilic thyroid tumors but not in normal thyroid tissue (at protein level). Strongly expressed in heart, skeletal muscle, pancreas, white blood cells and prostate with moderate expression in colon and spleen. Expressed in renal carcinoma cells but not in normal kidney.

The protein resides in the cytoplasm. It is found in the membrane. Functionally, regulates phosphorylation of a number of proteins involved in translation regulation including EIF2A, EIF4EBP1 and RPS6KB1. May be involved in the endoplasmic reticulum stress response. In Homo sapiens (Human), this protein is Protein Niban 1.